Consider the following 241-residue polypeptide: Large ribosomal subunit protein bL25 (241 aa).

A disordered region spans residues 214–241; the sequence is LDAVKAGEEGSRAQQETEEASERADQGQ.

This sequence belongs to the bacterial ribosomal protein bL25 family. CTC subfamily. As to quaternary structure, part of the 50S ribosomal subunit; part of the 5S rRNA/L5/L18/L25 subcomplex. Contacts the 5S rRNA. Binds to the 5S rRNA independently of L5 and L18.

Its function is as follows. This is one of the proteins that binds to the 5S RNA in the ribosome where it forms part of the central protuberance. In Deinococcus geothermalis (strain DSM 11300 / CIP 105573 / AG-3a), this protein is Large ribosomal subunit protein bL25.